Here is a 240-residue protein sequence, read N- to C-terminus: 4-hydroxy-tetrahydrodipicolinate reductase (240 aa).

NAD(+) is bound by residues 79-81 and 103-106; these read ATT and SANM. The active-site Proton donor/acceptor is the His-135. Residue His-136 participates in (S)-2,3,4,5-tetrahydrodipicolinate binding. Lys-139 (proton donor) is an active-site residue. 145 to 146 contributes to the (S)-2,3,4,5-tetrahydrodipicolinate binding site; it reads GT.

This sequence belongs to the DapB family.

The protein localises to the cytoplasm. It catalyses the reaction (S)-2,3,4,5-tetrahydrodipicolinate + NAD(+) + H2O = (2S,4S)-4-hydroxy-2,3,4,5-tetrahydrodipicolinate + NADH + H(+). The enzyme catalyses (S)-2,3,4,5-tetrahydrodipicolinate + NADP(+) + H2O = (2S,4S)-4-hydroxy-2,3,4,5-tetrahydrodipicolinate + NADPH + H(+). Its pathway is amino-acid biosynthesis; L-lysine biosynthesis via DAP pathway; (S)-tetrahydrodipicolinate from L-aspartate: step 4/4. In terms of biological role, catalyzes the conversion of 4-hydroxy-tetrahydrodipicolinate (HTPA) to tetrahydrodipicolinate. This chain is 4-hydroxy-tetrahydrodipicolinate reductase, found in Staphylococcus saprophyticus subsp. saprophyticus (strain ATCC 15305 / DSM 20229 / NCIMB 8711 / NCTC 7292 / S-41).